Reading from the N-terminus, the 324-residue chain is Probable UDP-sugar transporter protein SLC35A4 (324 aa).

Residues 1 to 18 (MSVEDGGLPGLGGPGQAR) lie on the Cytoplasmic side of the membrane. The helical transmembrane segment at 19–39 (WTLMLLLSTATYGAHAPLLAL) threads the bilayer. Residues 40–52 (CHVDGRVPFRPSS) lie on the Lumenal side of the membrane. Residues 53–73 (AVLLTELTKLLLCALSLLVGW) form a helical membrane-spanning segment. Topologically, residues 74 to 85 (QAWPPRTPPWRQ) are cytoplasmic. Residues 86 to 106 (AAPFALSALLYGANNNLVIHL) form a helical membrane-spanning segment. Topologically, residues 107 to 140 (QHYMDPSTYQVLSNLKIGSTALFYCLCLRRRLSA) are lumenal. Residues 141–161 (RQGLALLLLMAAGACYAAGGL) form a helical membrane-spanning segment. Residues 162–177 (RDPGSPLPESPSTAAS) are Cytoplasmic-facing. Residues 178–198 (GPVPLHVTAPGLLLLLLYCLI) form a helical membrane-spanning segment. At 199–214 (SGLSSVYTELLLKRQR) the chain is on the lumenal side. A helical transmembrane segment spans residues 215 to 235 (LPLALQNLFLYTFGVLLNLGL). Topologically, residues 236 to 248 (HAGGGPGPGLLEG) are cytoplasmic. The chain crosses the membrane as a helical span at residues 249-271 (FSGWAALVVLSQALNGLLMSAVM). Residues 272-279 (KHGSSITR) lie on the Lumenal side of the membrane. The helical transmembrane segment at 280 to 300 (LFVVSCSLVVNAVLSAALLRL) threads the bilayer. Residues 301-324 (QLTAAFFLAALLIGLAVHLYYGSR) lie on the Cytoplasmic side of the membrane.

This sequence belongs to the nucleotide-sugar transporter family. SLC35A subfamily. Found in a complex with SLC35A2 and SLC35A3.

It is found in the golgi apparatus membrane. The enzyme catalyses CDP-L-ribitol(in) + CDP(out) = CDP-L-ribitol(out) + CDP(in). Its function is as follows. Mediates the transport of CDP-ribitol. Does not exhibit CMP-sialic acid, UDP-galactose and UDP-N-acetylglucosamine transport activity. This Sus scrofa (Pig) protein is Probable UDP-sugar transporter protein SLC35A4.